A 313-amino-acid polypeptide reads, in one-letter code: Probable cell division protein WhiA (313 aa).

A DNA-binding region (H-T-H motif) is located at residues 278–311 (SLKELGKLLDPPLSKSGVNHRLRRIKSIANEIRG).

The protein belongs to the WhiA family.

Its function is as follows. Involved in cell division and chromosome segregation. This chain is Probable cell division protein WhiA, found in Halothermothrix orenii (strain H 168 / OCM 544 / DSM 9562).